The following is a 546-amino-acid chain: Phosphoglucomutase (546 aa).

The active-site Phosphoserine intermediate is the serine 135. Mg(2+) contacts are provided by serine 135, aspartate 288, aspartate 290, and aspartate 292.

This sequence belongs to the phosphohexose mutase family. Requires Mg(2+) as cofactor.

The catalysed reaction is alpha-D-glucose 1-phosphate = alpha-D-glucose 6-phosphate. Its pathway is glycolipid metabolism; diglucosyl-diacylglycerol biosynthesis. In terms of biological role, catalyzes the interconversion between glucose-6-phosphate and alpha-glucose-1-phosphate. This is the first step in the biosynthesis of diglucosyl-diacylglycerol (Glc2-DAG), i.e. a glycolipid found in the membrane, which is also used as a membrane anchor for lipoteichoic acid (LTA). This is Phosphoglucomutase (pgcA) from Staphylococcus epidermidis (strain ATCC 12228 / FDA PCI 1200).